Reading from the N-terminus, the 445-residue chain is UPF0210 protein Ccon26_06850 (445 aa).

It belongs to the UPF0210 family. As to quaternary structure, homodimer.

This is UPF0210 protein Ccon26_06850 from Campylobacter concisus (strain 13826).